The following is a 118-amino-acid chain: Large ribosomal subunit protein bL19 (118 aa).

Belongs to the bacterial ribosomal protein bL19 family.

In terms of biological role, this protein is located at the 30S-50S ribosomal subunit interface and may play a role in the structure and function of the aminoacyl-tRNA binding site. The chain is Large ribosomal subunit protein bL19 from Herpetosiphon aurantiacus (strain ATCC 23779 / DSM 785 / 114-95).